We begin with the raw amino-acid sequence, 452 residues long: Gastrin/cholecystokinin type B receptor (452 aa).

Residues 1–57 lie on the Extracellular side of the membrane; it reads MELLKLNRSLPGPGPGAALCRPEGPLLNGSGAGNLSCEPPRIRGAGTRELELAVRIT. Residues asparagine 7, asparagine 28, and asparagine 34 are each glycosylated (N-linked (GlcNAc...) asparagine). The helical transmembrane segment at 58-78 threads the bilayer; it reads LYAAIFLMSVAGNVLIIVVLG. Topologically, residues 79–99 are cytoplasmic; that stretch reads LSRRLRTVTNAFLLSLAVSDL. Residues 100 to 120 traverse the membrane as a helical segment; that stretch reads LLAVACMPFTLLPNLMGTFIF. Topologically, residues 121 to 127 are extracellular; it reads GTVVCKA. The cysteines at positions 125 and 203 are disulfide-linked. A helical transmembrane segment spans residues 128-148; that stretch reads VSYFMGVSVSVSTLSLVAIAL. The Cytoplasmic segment spans residues 149–171; the sequence is ERYSAICRPLQARVWQTRSHAAR. The chain crosses the membrane as a helical span at residues 172–192; sequence VIVATWMLSGLLMVPYPVYTA. At 193–218 the chain is on the extracellular side; sequence VQPAGPRVLQCMHRWPSARIRQTWSV. Residues 219–239 form a helical membrane-spanning segment; it reads LLLLLLFFVPGVVMAVAYGLI. The Cytoplasmic segment spans residues 240 to 339; it reads SRELYLGLRF…LLAKKRVVRM (100 aa). The segment at 256–285 is disordered; that stretch reads ESQSQVGSQGGLPGGAGQGPAHPNGHCRSE. Residues 263 to 273 show a composition bias toward gly residues; it reads SQGGLPGGAGQ. A helical membrane pass occupies residues 340-360; sequence LLVIVVLFFLCWLPVYSANTW. Topologically, residues 361 to 376 are extracellular; sequence RAFDGPGAHRALSGAP. The helical transmembrane segment at 377–397 threads the bilayer; sequence ISFIHLLSYASACVNPLVYCF. The Cytoplasmic portion of the chain corresponds to 398–452; sequence MHRRFRQACLDTCARCCPRPPRARPRPLPDEDPPTPSIASLSRLSYTTISTLGPG. A lipid anchor (S-palmitoyl cysteine) is attached at cysteine 413.

The protein belongs to the G-protein coupled receptor 1 family.

It localises to the cell membrane. Its function is as follows. Receptor for gastrin and cholecystokinin. The CCK-B receptors occur throughout the central nervous system where they modulate anxiety, analgesia, arousal, and neuroleptic activity. This receptor mediates its action by association with G proteins that activate a phosphatidylinositol-calcium second messenger system. This chain is Gastrin/cholecystokinin type B receptor, found in Sus scrofa (Pig).